A 96-amino-acid chain; its full sequence is SAGA complex subunit SUS1 (96 aa).

Lysine 68 is covalently cross-linked (Glycyl lysine isopeptide (Lys-Gly) (interchain with G-Cter in ubiquitin)).

Belongs to the ENY2 family. As to quaternary structure, component of the 1.8 MDa SAGA (Spt-Ada-Gcn5 acetyltransferase) complex, which is composed of 19 subunits TRA1, SPT7, TAF5, NGG1/ADA3, SGF73, SPT20/ADA5, SPT8, TAF12, TAF6, HFI1/ADA1, UBP8, GCN5, ADA2, SPT3, SGF29, TAF10, TAF9, SGF11 and SUS1. The SAGA complex is composed of 4 modules, namely the HAT (histone acetyltransferase) module (GCN5, ADA2, NGG1/ADA3 and SGF29), the DUB (deubiquitinating) module (UBP8, SGF11, SGF73 and SUS1), the core or TAF (TBP-associated factor) module (TAF5, TAF6, TAF9, TAF10 and TAF12), and the Tra1 or SPT (Suppressor of Ty) module (TRA1, HFI1/ADA1, SPT3, SPT7, SPT8 and SPT20/ADA5). The Tra1/SPT module binds activators, the core module recruits TBP (TATA-binding protein), the HAT module contains the histone H3 acetyltransferase GCN5, and the DUB module comprises the histone H2B deubiquitinase UBP8. Also identified in an altered form of SAGA, named SALSA (SAGA altered, Spt8 absent) or SLIK (SAGA-like) complex, which contains a C-terminal truncated form of SPT7 and is missing SPT8. However, it has been shown that the SAGA and SAGA-like SALSA/SLIK transcriptional coactivators are structurally and biochemically equivalent. Component of the nuclear pore complex (NPC)-associated TREX-2 complex (transcription and export complex 2), composed of at least SUS1, SAC3, THP1, SEM1, and CDC31. TREX-2 contains 2 SUS1 chains. The TREX-2 complex interacts with the mRNA export factors MEX67, MTR2 and SUB2, and the nucleoporin NUP1. Interacts directly with THP1, SAC3. Interacts directly with SGF11 and UBP8. Interacts with YRA1, MEX67 and with the RNA polymerase II.

The protein localises to the nucleus. It localises to the nucleoplasm. It is found in the cytoplasm. The protein resides in the P-body. In terms of biological role, involved in mRNA export coupled transcription activation by association with both the TREX-2 and the SAGA complexes. SAGA acts as a general cofactor required for essentially all RNA polymerase II transcription. At the promoters, SAGA is required for transcription pre-initiation complex (PIC) recruitment. It influences RNA polymerase II transcriptional activity through different activities such as TBP interaction (via core/TAF module) and promoter selectivity, interaction with transcription activators (via Tra1/SPT module), and chromatin modification through histone acetylation (via HAT module) and deubiquitination (via DUB module). SAGA preferentially acetylates histones H3 (to form H3K9ac, H3K14ac, H3K18ac and H3K23ac) and H2B and deubiquitinates histone H2B. SAGA interacts with DNA via upstream activating sequences (UASs). Also identified in a modified version of SAGA named SALSA or SLIK. The cleavage of SPT7 and the absence of the SPT8 subunit in SLIK neither drive any major conformational differences in its structure compared with SAGA, nor significantly affect HAT, DUB, or DNA-binding activities. Within the SAGA complex, participates in a subcomplex with SGF11, SGF73 and UBP8 required for deubiquitination of H2B and for the maintenance of steady-state H3 methylation levels. The TREX-2 complex functions in docking export-competent ribonucleoprotein particles (mRNPs) to the nuclear entrance of the nuclear pore complex (nuclear basket), by association with components of the nuclear mRNA export machinery (MEX67-MTR2 and SUB2) in the nucleoplasm and the nucleoporin NUP1 at the nuclear basket. TREX-2 participates in mRNA export and accurate chromatin positioning in the nucleus by tethering genes to the nuclear periphery. SUS1 also has a role in mRNP biogenesis and maintenance of genome integrity through preventing RNA-mediated genome instability. Has a role in response to DNA damage induced by methyl methane sulfonate (MMS) and replication arrest induced by hydroxyurea. May also be involved in cytoplasmic mRNA decay by interaction with components of P-bodies. The chain is SAGA complex subunit SUS1 from Saccharomyces cerevisiae (strain ATCC 204508 / S288c) (Baker's yeast).